The following is a 309-amino-acid chain: Pantothenate kinase (309 aa).

92–99 (GSVAVGKS) is an ATP binding site.

This sequence belongs to the prokaryotic pantothenate kinase family.

The protein localises to the cytoplasm. It carries out the reaction (R)-pantothenate + ATP = (R)-4'-phosphopantothenate + ADP + H(+). Its pathway is cofactor biosynthesis; coenzyme A biosynthesis; CoA from (R)-pantothenate: step 1/5. This is Pantothenate kinase from Latilactobacillus sakei subsp. sakei (strain 23K) (Lactobacillus sakei subsp. sakei).